A 332-amino-acid polypeptide reads, in one-letter code: MTVTANQVLRPRGPQIERLTDNRAKVVIEPLERGYGHTLGNALRRVLLSSIPGFAITEVEIDGVLHEYTTVEGLQEDVLDVLLNLKDVAIRMHSGDSATLSLSKQGPGTVTAADIRTDHNVEIINGDHVICHLTKDTALNMRLKIERGFGYQPAAARRRPDEETRTIGRLMLDASFSPVRRVAYAVEAARVEQRTDLDKLVIDIETNGTIDAEEAVRTAADILSDQLSVFGDFTHRDRGAAKPAASGVDPVLLRPIDDLELTVRSANCLKAESIYYIGDLIQKTEVELLKTPNLGKKSLTEIKEVLAQRGLALGMKLENWPPAGVAQHGMLG.

The interval 2 to 234 (TVTANQVLRP…DQLSVFGDFT (233 aa)) is alpha N-terminal domain (alpha-NTD). The interval 248 to 332 (VDPVLLRPID…AGVAQHGMLG (85 aa)) is alpha C-terminal domain (alpha-CTD).

Belongs to the RNA polymerase alpha chain family. In terms of assembly, homodimer. The RNAP catalytic core consists of 2 alpha, 1 beta, 1 beta' and 1 omega subunit. When a sigma factor is associated with the core the holoenzyme is formed, which can initiate transcription.

It catalyses the reaction RNA(n) + a ribonucleoside 5'-triphosphate = RNA(n+1) + diphosphate. Its function is as follows. DNA-dependent RNA polymerase catalyzes the transcription of DNA into RNA using the four ribonucleoside triphosphates as substrates. The sequence is that of DNA-directed RNA polymerase subunit alpha from Xanthomonas axonopodis pv. citri (strain 306).